Reading from the N-terminus, the 113-residue chain is Large ribosomal subunit protein bL19 (113 aa).

The protein belongs to the bacterial ribosomal protein bL19 family.

Its function is as follows. This protein is located at the 30S-50S ribosomal subunit interface and may play a role in the structure and function of the aminoacyl-tRNA binding site. In Corynebacterium efficiens (strain DSM 44549 / YS-314 / AJ 12310 / JCM 11189 / NBRC 100395), this protein is Large ribosomal subunit protein bL19.